The primary structure comprises 890 residues: Serine/threonine-protein kinase D3 (890 aa).

5 positions are modified to phosphoserine: S6, S27, S37, S41, and S44. The Phorbol-ester/DAG-type 1 zinc finger occupies 154–204; the sequence is PHTLYVHSYKAPTFCDYCGEMLWGLVRQGLKCEGCGLNYHKRCAFKIPNNC. Residues S213 and S216 each carry the phosphoserine modification. The Phorbol-ester/DAG-type 2 zinc-finger motif lies at 271-321; the sequence is PHTFAVHSYTRPTICQYCKRLLKGLFRQGMQCKDCKFNCHKRCASKVPRDC. The tract at residues 332-371 is disordered; sequence SSLGTDTDIPMDIDNNDINSDSSRGLDDTEEPSPPEDKMF. Phosphoserine occurs at positions 364, 391, and 395. A PH domain is found at 416 to 532; that stretch reads TMVKEGWMVH…WEKAIRQALM (117 aa). A Phosphotyrosine modification is found at Y426. At S442 the chain carries Phosphoserine. Residue Y457 is modified to Phosphotyrosine. Position 535 is a phosphothreonine (T535). S539 is modified (phosphoserine). The Protein kinase domain occupies 576 to 832; sequence IFADEVLGSG…VDKSLSHPWL (257 aa). Residues 582–590 and K605 contribute to the ATP site; that span reads LGSGQFGIV. The active-site Proton acceptor is the D699. At S731 the chain carries Phosphoserine; by PKC. The residue at position 735 (S735) is a Phosphoserine; by autocatalysis. Phosphotyrosine is present on Y742.

It belongs to the protein kinase superfamily. CAMK Ser/Thr protein kinase family. PKD subfamily. It depends on Mg(2+) as a cofactor. As to expression, ubiquitous.

Its subcellular location is the cytoplasm. It is found in the membrane. It carries out the reaction L-seryl-[protein] + ATP = O-phospho-L-seryl-[protein] + ADP + H(+). The catalysed reaction is L-threonyl-[protein] + ATP = O-phospho-L-threonyl-[protein] + ADP + H(+). With respect to regulation, activated by DAG and phorbol esters. Phorbol-ester/DAG-type domains 1 and 2 bind both DAG and phorbol ester with high affinity and mediate translocation to the cell membrane. Autophosphorylation of Ser-735 and phosphorylation of Ser-731 by PKC relieves auto-inhibition by the PH domain. Converts transient diacylglycerol (DAG) signals into prolonged physiological effects, downstream of PKC. Involved in resistance to oxidative stress. The polypeptide is Serine/threonine-protein kinase D3 (PRKD3) (Homo sapiens (Human)).